Reading from the N-terminus, the 369-residue chain is Phosphate acyltransferase (369 aa).

Residues 342–369 (ASRAPNSQTAGGERAAAVPQSAQLRMDS) form a disordered region.

The protein belongs to the PlsX family. In terms of assembly, homodimer. Probably interacts with PlsY.

The protein resides in the cytoplasm. It catalyses the reaction a fatty acyl-[ACP] + phosphate = an acyl phosphate + holo-[ACP]. It functions in the pathway lipid metabolism; phospholipid metabolism. Catalyzes the reversible formation of acyl-phosphate (acyl-PO(4)) from acyl-[acyl-carrier-protein] (acyl-ACP). This enzyme utilizes acyl-ACP as fatty acyl donor, but not acyl-CoA. This Methylocella silvestris (strain DSM 15510 / CIP 108128 / LMG 27833 / NCIMB 13906 / BL2) protein is Phosphate acyltransferase.